Reading from the N-terminus, the 301-residue chain is Acetyl-coenzyme A carboxylase carboxyl transferase subunit beta (301 aa).

Residues 25–294 (LWIKCPETGE…SAANDMNSGA (270 aa)) enclose the CoA carboxyltransferase N-terminal domain.

The protein belongs to the AccD/PCCB family. As to quaternary structure, acetyl-CoA carboxylase is a heterohexamer composed of biotin carboxyl carrier protein (AccB), biotin carboxylase (AccC) and two subunits each of ACCase subunit alpha (AccA) and ACCase subunit beta (AccD).

The protein resides in the cytoplasm. The catalysed reaction is N(6)-carboxybiotinyl-L-lysyl-[protein] + acetyl-CoA = N(6)-biotinyl-L-lysyl-[protein] + malonyl-CoA. Its pathway is lipid metabolism; malonyl-CoA biosynthesis; malonyl-CoA from acetyl-CoA: step 1/1. Component of the acetyl coenzyme A carboxylase (ACC) complex. Biotin carboxylase (BC) catalyzes the carboxylation of biotin on its carrier protein (BCCP) and then the CO(2) group is transferred by the transcarboxylase to acetyl-CoA to form malonyl-CoA. This Rhizobium leguminosarum bv. trifolii (strain WSM1325) protein is Acetyl-coenzyme A carboxylase carboxyl transferase subunit beta.